We begin with the raw amino-acid sequence, 125 residues long: Protein ApaG (125 aa).

An ApaG domain is found at Thr-3 to Asn-125.

In Anaeromyxobacter dehalogenans (strain 2CP-C), this protein is Protein ApaG.